The sequence spans 230 residues: Response regulator MprA (230 aa).

Residues 4 to 118 (RILVVDDDRA…ELLARMRALL (115 aa)) form the Response regulatory domain. Asp-48 is modified (4-aspartylphosphate). A DNA-binding region (ompR/PhoB-type) is located at residues 129 to 227 (SMAMRFSDLT…VRGVGYVLRE (99 aa)).

Post-translationally, phosphorylated and dephosphorylated by MprB.

It is found in the cytoplasm. In terms of biological role, member of the two-component regulatory system MprB/MprA which contributes to maintaining a balance among several systems involved in stress resistance and is required for establishment and maintenance of persistent infection in the host. Functions as a transcriptional regulator that recognizes a 19-bp nucleotide motif comprizing two loosely conserved 8-bp direct DNA-binding motif repeats separated by a 3-bp spacer region. The sequence is that of Response regulator MprA (mprA) from Mycobacterium tuberculosis (strain ATCC 25177 / H37Ra).